We begin with the raw amino-acid sequence, 623 residues long: V-type proton ATPase catalytic subunit A (623 aa).

252–259 serves as a coordination point for ATP; sequence GAFGCGKT.

It belongs to the ATPase alpha/beta chains family. V-ATPase is a heteromultimeric enzyme composed of a peripheral catalytic V1 complex (main components: subunits A, B, C, D, E, and F) attached to an integral membrane V0 proton pore complex (main component: the proteolipid protein).

It catalyses the reaction ATP + H2O + 4 H(+)(in) = ADP + phosphate + 5 H(+)(out). Its function is as follows. Catalytic subunit of the peripheral V1 complex of vacuolar ATPase. V-ATPase vacuolar ATPase is responsible for acidifying a variety of intracellular compartments in eukaryotic cells. This Gossypium hirsutum (Upland cotton) protein is V-type proton ATPase catalytic subunit A (CVA69.24).